A 687-amino-acid chain; its full sequence is DNA-directed RNA polymerase subunit beta' (687 aa).

4 residues coordinate Zn(2+): Cys-69, Cys-71, Cys-87, and Cys-90. Mg(2+) is bound by residues Asp-492, Asp-494, and Asp-496.

Belongs to the RNA polymerase beta' chain family. RpoC1 subfamily. As to quaternary structure, in plastids the minimal PEP RNA polymerase catalytic core is composed of four subunits: alpha, beta, beta', and beta''. When a (nuclear-encoded) sigma factor is associated with the core the holoenzyme is formed, which can initiate transcription. Requires Mg(2+) as cofactor. Zn(2+) serves as cofactor.

The protein resides in the plastid. It is found in the chloroplast. The enzyme catalyses RNA(n) + a ribonucleoside 5'-triphosphate = RNA(n+1) + diphosphate. DNA-dependent RNA polymerase catalyzes the transcription of DNA into RNA using the four ribonucleoside triphosphates as substrates. This Silene latifolia (White campion) protein is DNA-directed RNA polymerase subunit beta'.